Reading from the N-terminus, the 312-residue chain is Acetyl-coenzyme A carboxylase carboxyl transferase subunit alpha (312 aa).

In terms of domain architecture, CoA carboxyltransferase C-terminal spans 36–286 (RLDKEVKSIY…KEYFLDALRT (251 aa)).

Belongs to the AccA family. In terms of assembly, acetyl-CoA carboxylase is a heterohexamer composed of biotin carboxyl carrier protein (AccB), biotin carboxylase (AccC) and two subunits each of ACCase subunit alpha (AccA) and ACCase subunit beta (AccD).

It is found in the cytoplasm. It catalyses the reaction N(6)-carboxybiotinyl-L-lysyl-[protein] + acetyl-CoA = N(6)-biotinyl-L-lysyl-[protein] + malonyl-CoA. It participates in lipid metabolism; malonyl-CoA biosynthesis; malonyl-CoA from acetyl-CoA: step 1/1. In terms of biological role, component of the acetyl coenzyme A carboxylase (ACC) complex. First, biotin carboxylase catalyzes the carboxylation of biotin on its carrier protein (BCCP) and then the CO(2) group is transferred by the carboxyltransferase to acetyl-CoA to form malonyl-CoA. The protein is Acetyl-coenzyme A carboxylase carboxyl transferase subunit alpha of Helicobacter pylori (strain ATCC 700392 / 26695) (Campylobacter pylori).